The sequence spans 616 residues: MALLQIAEPGQSAAPHQQKLAVGIDLGTTNSLVAAVRSGEASTLVDQQGRSILPSVVHYTSVSYTTGDEARANAQTDPKNTIISVKRLIGRSLSDIQQRYPSLPYQFEESDNGLPVIRTEQGNKNPIQVSSDILRALGQRAESTLGGELSGAVITVPAYFDDAQRAGTKDAAQLAGLHVLRLLNEPTAAAIAYGLDSGKEGVIAVYDLGGGTFDISILRLSKGVFEVLATGGDSALGGDDFDHLIAEHFQEQMGLSELTAEQNRILLDAATEAKIGLSEAESVNVEVLGWAGSLTREEFEDIIKPLVKKTLLSCRRALKDAEVDADDVLEVVMVGGSTRTLLVREMVGDFFGRTPLTSINPDEVVAIGASIQADILVGNKPDSEMLLLDVIPLSLGIETMGGLVEKIIPRNTTIPVARAQEFTTFKDGQTAMTVHTVQGEREMVDDCRSLARFALKGIPPMAAGAAHIRVTYQVDADGLLSVTAMEKSTGVQAEIQVKPSYGLSDNEVASMLKDSMTFAKEDMQARALAEQRVEADRVIEGLIAAMQADGDELLDEQEKQHLLQAIEALIEVRNGESADAIELEIKNTDKASQDFASRRMDKSIRAALSGQSVDNI.

The protein belongs to the heat shock protein 70 family.

In terms of biological role, chaperone involved in the maturation of iron-sulfur cluster-containing proteins. Has a low intrinsic ATPase activity which is markedly stimulated by HscB. The chain is Chaperone protein HscA homolog from Vibrio atlanticus (strain LGP32) (Vibrio splendidus (strain Mel32)).